The sequence spans 101 residues: Protamine-3 (101 aa).

Residues 1 to 101 (MGSRCAKLST…PSPEPKQTHS (101 aa)) are disordered. Over residues 45-67 (EGEEEEEDEEEEEEEEEEEEEEQ) the composition is skewed to acidic residues. Phosphoserine is present on serine 93.

Belongs to the protamine P3 family. As to expression, testis.

The protein resides in the nucleus. It localises to the chromosome. In terms of biological role, protamines substitute for histones in the chromatin of sperm during the haploid phase of spermatogenesis. They compact sperm DNA into a highly condensed, stable and inactive complex. This chain is Protamine-3 (Prm3), found in Mus musculus (Mouse).